A 356-amino-acid chain; its full sequence is Caspase activity and apoptosis inhibitor 1 (356 aa).

Basic residues predominate over residues 1–14 (MTGKKSSREKRRKR). Disordered regions lie at residues 1-24 (MTGK…ASLA) and 54-80 (VAGG…GSLQ). A Phosphoserine modification is found at Ser-68. Residue Thr-69 is modified to Phosphothreonine. A Glycyl lysine isopeptide (Lys-Gly) (interchain with G-Cter in SUMO2) cross-link involves residue Lys-84. A phosphoserine mark is found at Ser-100 and Ser-183. Residues 208-234 (DSTSSLRENKQPEVLESKQGKGEDSDV) form a disordered region. Over residues 214–231 (RENKQPEVLESKQGKGED) the composition is skewed to basic and acidic residues. The stretch at 276–306 (ENTVQSEAGQIDDLERDIEKSVNEILGLAES) forms a coiled coil. Residue Ser-307 is modified to Phosphoserine.

Anti-apoptotic protein that modulates a caspase-10 dependent mitochondrial caspase-3/9 feedback amplification loop. The polypeptide is Caspase activity and apoptosis inhibitor 1 (Caap1) (Mus musculus (Mouse)).